The chain runs to 651 residues: Mitogen-activated protein kinase kinase kinase 2 (651 aa).

Positions 68–330 constitute a Protein kinase domain; it reads WRKGQLIGRG…ASELLKHPFV (263 aa). Residues 74–82 and Lys-97 contribute to the ATP site; that span reads IGRGAFGTV. The stretch at 105–130 forms a coiled coil; that stretch reads CASKEKTQAHIQELEEEVKLLKNLSH. Residues Lys-108 and Lys-110 each participate in a glycyl lysine isopeptide (Lys-Gly) (interchain with G-Cter in ubiquitin) cross-link. The Proton acceptor role is filled by Asp-196. Disordered stretches follow at residues 460–483, 537–601, and 618–651; these read GNGETETKVSMEVDHPSYSEDENE, RGFL…VALS, and KRREITRQAGMGSSPRDRSLSRHREKSRFASPGK. Basic and acidic residues predominate over residues 464–477; it reads TETKVSMEVDHPSY. Residues 570-599 are compositionally biased toward polar residues; sequence SPESGNSSGAPKNSNASAGAEQESNSQSVA. Residues 605 to 628 are a coiled coil; the sequence is RKWKEELDQELERKRREITRQAGM.

It belongs to the protein kinase superfamily. STE Ser/Thr protein kinase family. MAP kinase kinase kinase subfamily. As to expression, expressed in roots and flowers.

The protein localises to the cytoplasm. Its subcellular location is the cytoskeleton. It carries out the reaction L-seryl-[protein] + ATP = O-phospho-L-seryl-[protein] + ADP + H(+). It catalyses the reaction L-threonyl-[protein] + ATP = O-phospho-L-threonyl-[protein] + ADP + H(+). Functionally, involved in cortical microtubules organization and stabilization by regulating the phosphorylation state of microtubule-associated proteins such as MAP65-1. This chain is Mitogen-activated protein kinase kinase kinase 2 (ANP2), found in Arabidopsis thaliana (Mouse-ear cress).